The sequence spans 173 residues: Crossover junction endodeoxyribonuclease RuvC (173 aa).

Active-site residues include aspartate 8, glutamate 67, and aspartate 139. Positions 8, 67, and 139 each coordinate Mg(2+).

This sequence belongs to the RuvC family. Homodimer which binds Holliday junction (HJ) DNA. The HJ becomes 2-fold symmetrical on binding to RuvC with unstacked arms; it has a different conformation from HJ DNA in complex with RuvA. In the full resolvosome a probable DNA-RuvA(4)-RuvB(12)-RuvC(2) complex forms which resolves the HJ. It depends on Mg(2+) as a cofactor.

Its subcellular location is the cytoplasm. The enzyme catalyses Endonucleolytic cleavage at a junction such as a reciprocal single-stranded crossover between two homologous DNA duplexes (Holliday junction).. Its function is as follows. The RuvA-RuvB-RuvC complex processes Holliday junction (HJ) DNA during genetic recombination and DNA repair. Endonuclease that resolves HJ intermediates. Cleaves cruciform DNA by making single-stranded nicks across the HJ at symmetrical positions within the homologous arms, yielding a 5'-phosphate and a 3'-hydroxyl group; requires a central core of homology in the junction. The consensus cleavage sequence is 5'-(A/T)TT(C/G)-3'. Cleavage occurs on the 3'-side of the TT dinucleotide at the point of strand exchange. HJ branch migration catalyzed by RuvA-RuvB allows RuvC to scan DNA until it finds its consensus sequence, where it cleaves and resolves the cruciform DNA. This chain is Crossover junction endodeoxyribonuclease RuvC, found in Salmonella arizonae (strain ATCC BAA-731 / CDC346-86 / RSK2980).